Here is a 700-residue protein sequence, read N- to C-terminus: Methionine--tRNA ligase (700 aa).

The short motif at Pro-14–His-24 is the 'HIGH' region element. Residues Cys-146, Cys-149, Cys-159, and Cys-162 each coordinate Zn(2+). Residues Lys-344–Ser-348 carry the 'KMSKS' region motif. Lys-347 contacts ATP. Residues Asp-599–Gln-700 form the tRNA-binding domain.

This sequence belongs to the class-I aminoacyl-tRNA synthetase family. MetG type 1 subfamily. Homodimer. Zn(2+) is required as a cofactor.

Its subcellular location is the cytoplasm. The catalysed reaction is tRNA(Met) + L-methionine + ATP = L-methionyl-tRNA(Met) + AMP + diphosphate. Functionally, is required not only for elongation of protein synthesis but also for the initiation of all mRNA translation through initiator tRNA(fMet) aminoacylation. The chain is Methionine--tRNA ligase from Pelodictyon phaeoclathratiforme (strain DSM 5477 / BU-1).